A 258-amino-acid chain; its full sequence is UPF0246 protein YPK_3600 (258 aa).

Belongs to the UPF0246 family.

This is UPF0246 protein YPK_3600 from Yersinia pseudotuberculosis serotype O:3 (strain YPIII).